A 299-amino-acid chain; its full sequence is Nicotinate-nucleotide pyrophosphorylase [carboxylating] (299 aa).

The segment at 8 to 12 is important for hexamer formation; sequence HLLPP. Quinolinate contacts are provided by residues R102, 138-139, 160-161, K171, E201, D222, 248-250, and G270; these read RK, HR, and SGG. Position 291 is a phosphothreonine (T291).

The protein belongs to the NadC/ModD family. As to quaternary structure, hexamer formed by 3 homodimers.

The enzyme catalyses nicotinate beta-D-ribonucleotide + CO2 + diphosphate = quinolinate + 5-phospho-alpha-D-ribose 1-diphosphate + 2 H(+). The protein operates within cofactor biosynthesis; NAD(+) biosynthesis; nicotinate D-ribonucleotide from quinolinate: step 1/1. In terms of biological role, involved in the catabolism of quinolinic acid (QA). The chain is Nicotinate-nucleotide pyrophosphorylase [carboxylating] (QPRT) from Bos taurus (Bovine).